Here is a 220-residue protein sequence, read N- to C-terminus: UPF0502 protein PSPPH_2577 (220 aa).

This sequence belongs to the UPF0502 family.

This Pseudomonas savastanoi pv. phaseolicola (strain 1448A / Race 6) (Pseudomonas syringae pv. phaseolicola (strain 1448A / Race 6)) protein is UPF0502 protein PSPPH_2577.